We begin with the raw amino-acid sequence, 92 residues long: FMRFamide-like neuropeptides 5 (92 aa).

Residues 1–41 (MSSRSTTIAFLFIATLLVFQCVSAQSSAEDADYLEKYQRIA) constitute a propeptide that is removed on maturation. F51 and F61 each carry phenylalanine amide. The propeptide occupies 64–82 (SRNTWEDGYASPSVNELYV). Residue F91 is modified to Phenylalanine amide.

The protein belongs to the FARP (FMRFamide related peptide) family. Each flp gene is expressed in a distinct set of neurons. Flp-5 is expressed in the ASE sensory neurons, the 14 and M4 cholinergic pharyngeal motoneurons, and the PVT and RMG neurons. It is weakly expressed in the PB and 12 neurons. Also expressed in pharyngeal muscle.

Its subcellular location is the secreted. FMRFamides and FMRFamide-like peptides are neuropeptides. GAKFIRF-amide has an excitatory effect on dissected pharyngeal myogenic muscle system. This is FMRFamide-like neuropeptides 5 from Caenorhabditis elegans.